Here is a 668-residue protein sequence, read N- to C-terminus: MKEFKLHASFQPAGDQIAAIDALVRGLHAGARFQTLKGVTGSGKTFTVANVIARVQKPTLVISHNKTLSAQLYREFKGFFPDNAVEYFVSYYDYYQPESYVPARDLYIEKDASINAEINRMRLSATFSLMERRDVIVVATVSCIYGLGLPESWRDLRIHVEVNQCLDLEDLKRQLVSLQYERNDAVLECGRFRVRGDVIEIFPAYLEEFYRIECDWDRVVRIRRIHPVSGAVLREFEELTVYPAKHFVLKEDAIPRAMDRIRQELDERLVQLTQENKLAEAARLKTRTEYDLEMLGEMGYCHGIENYSAPIAGRKSGEPPVTLLHYFPKDFVLFVDESHVTLPQLGAMYEGDRVRKQNLIDFGFRLPCARDNRPLKDSEFEALLNQAVFISATPGVKERTQSVQIVEQLIRPTGLLDPCIEVRKTDGQIEDICQRVKACSARNERSLVLTLTKKMAEDLTDYFNGLGIRTKYVHSEIETIERVEILTSLRAGECEVLVGINLLREGIDLPEVAFIAILDANIVGFLRSTTSLIQIIGRAARNARGTVVMYADAISDAMREAIEETARRRKIQMAYNRAHGITPRTIKKSIEDILVREQEVKKDAARVQVAPLLRAADADVRTHAARKKMVQALRLHMKVCARELRFEEAALIRDKILQLQRQDEQNGV.

Residues 25–414 enclose the Helicase ATP-binding domain; the sequence is RGLHAGARFQ…IVEQLIRPTG (390 aa). ATP is bound at residue 38–45; sequence GVTGSGKT. The short motif at 91 to 114 is the Beta-hairpin element; it reads YYDYYQPESYVPARDLYIEKDASI. Residues 431–594 enclose the Helicase C-terminal domain; it reads DICQRVKACS…TIKKSIEDIL (164 aa). In terms of domain architecture, UVR spans 627-662; sequence KKMVQALRLHMKVCARELRFEEAALIRDKILQLQRQ.

It belongs to the UvrB family. As to quaternary structure, forms a heterotetramer with UvrA during the search for lesions. Interacts with UvrC in an incision complex.

Its subcellular location is the cytoplasm. Functionally, the UvrABC repair system catalyzes the recognition and processing of DNA lesions. A damage recognition complex composed of 2 UvrA and 2 UvrB subunits scans DNA for abnormalities. Upon binding of the UvrA(2)B(2) complex to a putative damaged site, the DNA wraps around one UvrB monomer. DNA wrap is dependent on ATP binding by UvrB and probably causes local melting of the DNA helix, facilitating insertion of UvrB beta-hairpin between the DNA strands. Then UvrB probes one DNA strand for the presence of a lesion. If a lesion is found the UvrA subunits dissociate and the UvrB-DNA preincision complex is formed. This complex is subsequently bound by UvrC and the second UvrB is released. If no lesion is found, the DNA wraps around the other UvrB subunit that will check the other stand for damage. The polypeptide is UvrABC system protein B (Treponema pallidum (strain Nichols)).